The primary structure comprises 196 residues: Small ribosomal subunit protein uS4c (196 aa).

In terms of domain architecture, S4 RNA-binding spans Met89–Gln149.

Belongs to the universal ribosomal protein uS4 family. As to quaternary structure, part of the 30S ribosomal subunit. Contacts protein S5. The interaction surface between S4 and S5 is involved in control of translational fidelity.

The protein resides in the plastid. It localises to the chloroplast. In terms of biological role, one of the primary rRNA binding proteins, it binds directly to 16S rRNA where it nucleates assembly of the body of the 30S subunit. Functionally, with S5 and S12 plays an important role in translational accuracy. The chain is Small ribosomal subunit protein uS4c (rps4) from Asparagus maritimus (Sea asparagus).